The primary structure comprises 782 residues: E3 ubiquitin-protein ligase SopA (782 aa).

The disordered stretch occupies residues 137–171 (VSVSANNRPTVSEGRTPPVSPSLSLQATSSPSSPA). The span at 157–171 (PSLSLQATSSPSSPA) shows a compositional bias: low complexity. Residue cysteine 753 is the Glycyl thioester intermediate of the active site.

It belongs to the SopA E3 ligase family. Post-translationally, ubiquitinated in the presence of host E1 ubiquitin-activating enzyme, E2 ubiquitin-conjugating enzyme and ubiquitin.

The protein resides in the secreted. Its subcellular location is the host cell. It catalyses the reaction S-ubiquitinyl-[E2 ubiquitin-conjugating enzyme]-L-cysteine + [acceptor protein]-L-lysine = [E2 ubiquitin-conjugating enzyme]-L-cysteine + N(6)-ubiquitinyl-[acceptor protein]-L-lysine.. Functionally, effector proteins function to alter host cell physiology and promote bacterial survival in host tissues. This protein is an E3 ubiquitin ligase that interferes with host's ubiquitination pathway. This chain is E3 ubiquitin-protein ligase SopA (sopA), found in Salmonella enteritidis PT4 (strain P125109).